The primary structure comprises 380 residues: Putative heat stress transcription factor B-4a (380 aa).

The interval leucine 216–valine 245 is hydrophobic repeat HR-A/B. Disordered regions lie at residues proline 268 to glutamate 296 and isoleucine 314 to proline 380. Over residues valine 278 to glutamate 296 the composition is skewed to low complexity. Positions arginine 346–arginine 348 match the Nuclear localization signal motif.

The protein belongs to the HSF family. Class B subfamily. Homotrimer. Post-translationally, exhibits temperature-dependent phosphorylation.

The protein localises to the nucleus. Its function is as follows. Transcriptional regulator that specifically binds DNA of heat shock promoter elements (HSE). This chain is Putative heat stress transcription factor B-4a (HSFB4A), found in Oryza sativa subsp. japonica (Rice).